The chain runs to 220 residues: dITP/XTP pyrophosphatase (220 aa).

13 to 18 (SHNAGK) is a binding site for substrate. Positions 45 and 74 each coordinate Mg(2+). The active-site Proton acceptor is the D74. Substrate is bound by residues S75, 163-166 (FGYD), K186, and 199-200 (HR).

This sequence belongs to the HAM1 NTPase family. Homodimer. The cofactor is Mg(2+).

The catalysed reaction is XTP + H2O = XMP + diphosphate + H(+). The enzyme catalyses dITP + H2O = dIMP + diphosphate + H(+). It carries out the reaction ITP + H2O = IMP + diphosphate + H(+). Functionally, pyrophosphatase that catalyzes the hydrolysis of nucleoside triphosphates to their monophosphate derivatives, with a high preference for the non-canonical purine nucleotides XTP (xanthosine triphosphate), dITP (deoxyinosine triphosphate) and ITP. Seems to function as a house-cleaning enzyme that removes non-canonical purine nucleotides from the nucleotide pool, thus preventing their incorporation into DNA/RNA and avoiding chromosomal lesions. The sequence is that of dITP/XTP pyrophosphatase from Mesorhizobium japonicum (strain LMG 29417 / CECT 9101 / MAFF 303099) (Mesorhizobium loti (strain MAFF 303099)).